The primary structure comprises 324 residues: Annexin A10 (324 aa).

Annexin repeat units lie at residues 17–88 (FNPI…GLMY), 89–160 (PPPL…NLVQ), 171–243 (AMAA…AIVL), and 247–318 (DKPA…AICA).

This sequence belongs to the annexin family.

This Homo sapiens (Human) protein is Annexin A10 (ANXA10).